The primary structure comprises 131 residues: Global transcriptional regulator Spx (131 aa).

Cys-10 and Cys-13 are disulfide-bonded.

It belongs to the ArsC family. Spx subfamily. As to quaternary structure, interacts with the C-terminal domain of the alpha subunit of the RNAP.

The protein localises to the cytoplasm. Functionally, global transcriptional regulator that plays a key role in stress response and exerts either positive or negative regulation of genes. Acts by interacting with the C-terminal domain of the alpha subunit of the RNA polymerase (RNAP). This interaction can enhance binding of RNAP to the promoter region of target genes and stimulate their transcription, or block interaction of RNAP with activator. This is Global transcriptional regulator Spx from Listeria innocua serovar 6a (strain ATCC BAA-680 / CLIP 11262).